The sequence spans 934 residues: Aconitate hydratase A (934 aa).

The interval 398–454 (EPVDESLPAKRMDSEGAVQKEGEDVAGYNSSRAGHGESAAEGAAGRQSNPVVVSSPN) is disordered. Positions 404-420 (LPAKRMDSEGAVQKEGE) are enriched in basic and acidic residues. Positions 427 to 445 (SSRAGHGESAAEGAAGRQS) are enriched in low complexity. Residues cysteine 473, cysteine 539, and cysteine 542 each coordinate [4Fe-4S] cluster.

This sequence belongs to the aconitase/IPM isomerase family. Monomer. It depends on [4Fe-4S] cluster as a cofactor.

It catalyses the reaction citrate = D-threo-isocitrate. The catalysed reaction is (2S,3R)-3-hydroxybutane-1,2,3-tricarboxylate = 2-methyl-cis-aconitate + H2O. It functions in the pathway carbohydrate metabolism; tricarboxylic acid cycle; isocitrate from oxaloacetate: step 2/2. Its pathway is organic acid metabolism; propanoate degradation. Functionally, involved in the catabolism of short chain fatty acids (SCFA) via the tricarboxylic acid (TCA)(acetyl degradation route) and probably via the 2-methylcitrate cycle I (propionate degradation route). Catalyzes the reversible isomerization of citrate to isocitrate via cis-aconitate. Could catalyze the hydration of 2-methyl-cis-aconitate to yield (2R,3S)-2-methylisocitrate. The apo form of AcnA functions as a RNA-binding regulatory protein. The protein is Aconitate hydratase A (acn) of Corynebacterium diphtheriae (strain ATCC 700971 / NCTC 13129 / Biotype gravis).